Consider the following 232-residue polypeptide: Orotate phosphoribosyltransferase (232 aa).

5-phospho-alpha-D-ribose 1-diphosphate contacts are provided by residues R107, K108, K111, H113, and 133 to 141; that span reads EDLTTAGGS. T137 lines the orotate pocket.

This sequence belongs to the purine/pyrimidine phosphoribosyltransferase family. PyrE subfamily. In terms of assembly, homodimer. The cofactor is Mg(2+).

The enzyme catalyses orotidine 5'-phosphate + diphosphate = orotate + 5-phospho-alpha-D-ribose 1-diphosphate. It participates in pyrimidine metabolism; UMP biosynthesis via de novo pathway; UMP from orotate: step 1/2. Functionally, catalyzes the transfer of a ribosyl phosphate group from 5-phosphoribose 1-diphosphate to orotate, leading to the formation of orotidine monophosphate (OMP). This chain is Orotate phosphoribosyltransferase, found in Sinorhizobium fredii (strain NBRC 101917 / NGR234).